The primary structure comprises 574 residues: MDKYDKIIDLTKRRGFLWNSFEIYGGIAGFFDYGPLGAILKNNVINTWRKHYIVNEGFYEIDSPTVTPYEVLKASGHVENFTDPLVECKDCLESFRADHIIEENVDVDTEGKTLQELQEMIEKNNIRCPKCGGEFKEVSTFNLMFATSIGPGGKRAAFMRPETAQGIFIQFKRISQFFRNKLPFGAVQIGKAYRNEISPRQGVIRLREFTQAEGEFFIDSRKKENFEKFESVKDMVLPLLSGKNQEDESLSSEEKVVKMSLSDAVKNGIIAHEAIAYYIAVTKKFLMEIGIDETKLRFRQHLPNEMAHYAADCWDAELYTDRYGWIECVGVADRTNYDLLAHMKNSGDDLSVFVELDEEHEIEAYEIELNYKLVGRTFKGDAKVLEESLKELDDKKMEELVEALETEGKYVLKTCKRDFEILKEYLTAKKVKKIVKGEKIIPHVIEPSYGIDRITYCVMEHAFKEDEDRTVMGFSNAVSPIKVGVFPLVNKEGMPEIAMDLKNKLRENGLIAEYDDSGAIGRRYMRMDEVGTPFCITIDGETLKDRSVTIRERDSREQFRIPINEVVPYIKDKL.

Positions 96 and 162 each coordinate substrate. ATP contacts are provided by residues 194–196, 204–209, 327–328, and 450–453; these read RNE, IRLREF, EC, and GIDR. 209–213 provides a ligand contact to substrate; the sequence is FTQAE. 446–450 lines the substrate pocket; it reads EPSYG.

Belongs to the class-II aminoacyl-tRNA synthetase family.

The protein localises to the cytoplasm. The catalysed reaction is tRNA(Gly) + glycine + ATP = glycyl-tRNA(Gly) + AMP + diphosphate. In terms of biological role, catalyzes the attachment of glycine to tRNA(Gly). The chain is Glycine--tRNA ligase from Methanococcus maripaludis (strain DSM 14266 / JCM 13030 / NBRC 101832 / S2 / LL).